Consider the following 222-residue polypeptide: Pyridoxal phosphate homeostasis protein (222 aa).

Lys35 is subject to N6-(pyridoxal phosphate)lysine.

It belongs to the pyridoxal phosphate-binding protein YggS/PROSC family.

Its function is as follows. Pyridoxal 5'-phosphate (PLP)-binding protein, which is involved in PLP homeostasis. The protein is Pyridoxal phosphate homeostasis protein of Helicobacter pylori (strain ATCC 700392 / 26695) (Campylobacter pylori).